The sequence spans 138 residues: Putative pre-16S rRNA nuclease (138 aa).

This sequence belongs to the YqgF nuclease family.

Its subcellular location is the cytoplasm. In terms of biological role, could be a nuclease involved in processing of the 5'-end of pre-16S rRNA. This chain is Putative pre-16S rRNA nuclease, found in Fusobacterium nucleatum subsp. nucleatum (strain ATCC 25586 / DSM 15643 / BCRC 10681 / CIP 101130 / JCM 8532 / KCTC 2640 / LMG 13131 / VPI 4355).